The sequence spans 500 residues: Protein-tyrosine sulfotransferase (500 aa).

A signal peptide spans 1 to 24; that stretch reads MQMNSVWKLSLGLLLLSSVIGSFA. Residues 25–467 are Lumenal-facing; sequence ELDFGHCETL…SVLGEMGEEK (443 aa). Residues Arg121 and Glu142 contribute to the active site. 6 N-linked (GlcNAc...) asparagine glycosylation sites follow: Asn156, Asn248, Asn315, Asn343, Asn359, and Asn395. The chain crosses the membrane as a helical span at residues 468 to 488; the sequence is LWKFVPVALMLLLIVLFFLFV. Over 489–500 the chain is Cytoplasmic; sequence NAKRRRTSKVKI.

Expressed throughout the plant body, highest levels of expression are in the root apical meristem.

It localises to the golgi apparatus membrane. The enzyme catalyses L-tyrosyl-[protein] + 3'-phosphoadenylyl sulfate = O-sulfo-L-tyrosine-[protein] + adenosine 3',5'-bisphosphate + H(+). Its function is as follows. Catalyzes the O-sulfation of tyrosine residues within acidic motifs of polypeptides. This chain is Protein-tyrosine sulfotransferase (TPST), found in Arabidopsis thaliana (Mouse-ear cress).